A 119-amino-acid chain; its full sequence is Large ribosomal subunit protein uL18 (119 aa).

The segment at 1 to 25 (MITKIDKNKVRKKRHARVRSKISGT) is disordered. A compositionally biased stretch (basic residues) spans 9 to 20 (KVRKKRHARVRS).

It belongs to the universal ribosomal protein uL18 family. Part of the 50S ribosomal subunit; part of the 5S rRNA/L5/L18/L25 subcomplex. Contacts the 5S and 23S rRNAs.

Functionally, this is one of the proteins that bind and probably mediate the attachment of the 5S RNA into the large ribosomal subunit, where it forms part of the central protuberance. The chain is Large ribosomal subunit protein uL18 from Listeria monocytogenes serotype 4b (strain CLIP80459).